The following is a 502-amino-acid chain: Putative ZDHHC-type palmitoyltransferase 3 (502 aa).

The interval 1–80 (MVNNNNKNNK…ESTNENNKKL (80 aa)) is disordered. A compositionally biased stretch (basic and acidic residues) spans 10 to 30 (KINDRENEENEKNKKKDKIYE). A compositionally biased stretch (low complexity) spans 31 to 52 (NKIGINENNNENNNYQNENFIY). A glycan (N-linked (GlcNAc...) asparagine) is linked at Asn-58. The segment covering 59–73 (DTQEGDISEIQEEST) has biased composition (acidic residues). Helical transmembrane passes span 104–124 (FFIV…IKLV) and 134–154 (LEIS…YNLY). The tract at residues 200–281 (IANDDPISSS…NNNNNNNKNQ (82 aa)) is disordered. The span at 203–212 (DDPISSSSDF) shows a compositional bias: low complexity. A compositionally biased stretch (acidic residues) spans 213 to 222 (SDSDDDDQDE). The segment covering 248-280 (NSNNNNSNNNNNNNKNRNRNNNNNNNNNNNNKN) has biased composition (low complexity). N-linked (GlcNAc...) asparagine glycosylation is found at Asn-252 and Asn-280. The DHHC domain maps to 299 to 349 (KFCITCGLYREPRSFHCSTCNNCVENFDHHCVWIGNCIGRRNYREFFYFIT). Cys-329 functions as the S-palmitoyl cysteine intermediate in the catalytic mechanism. Residues 344-364 (FFYFITTTLIYALYLLSMSIV) traverse the membrane as a helical segment. N-linked (GlcNAc...) asparagine glycosylation is found at Asn-371, Asn-388, and Asn-393. Residues 419 to 439 (GLCIFIIIFGFIMSLLLGFLV) traverse the membrane as a helical segment. 3 N-linked (GlcNAc...) asparagine glycosylation sites follow: Asn-449, Asn-483, and Asn-494.

Belongs to the DHHC palmitoyltransferase family.

The protein resides in the membrane. The enzyme catalyses L-cysteinyl-[protein] + hexadecanoyl-CoA = S-hexadecanoyl-L-cysteinyl-[protein] + CoA. The protein is Putative ZDHHC-type palmitoyltransferase 3 of Dictyostelium discoideum (Social amoeba).